The chain runs to 406 residues: Phosphopentomutase (406 aa).

Mn(2+)-binding residues include D10, D305, H310, D346, H347, and H358.

It belongs to the phosphopentomutase family. The cofactor is Mn(2+).

Its subcellular location is the cytoplasm. It catalyses the reaction 2-deoxy-alpha-D-ribose 1-phosphate = 2-deoxy-D-ribose 5-phosphate. The enzyme catalyses alpha-D-ribose 1-phosphate = D-ribose 5-phosphate. The protein operates within carbohydrate degradation; 2-deoxy-D-ribose 1-phosphate degradation; D-glyceraldehyde 3-phosphate and acetaldehyde from 2-deoxy-alpha-D-ribose 1-phosphate: step 1/2. Isomerase that catalyzes the conversion of deoxy-ribose 1-phosphate (dRib-1-P) and ribose 1-phosphate (Rib-1-P) to deoxy-ribose 5-phosphate (dRib-5-P) and ribose 5-phosphate (Rib-5-P), respectively. The sequence is that of Phosphopentomutase from Vibrio parahaemolyticus serotype O3:K6 (strain RIMD 2210633).